The primary structure comprises 162 residues: Type IV major fimbrial protein FimA (162 aa).

Residues 1–7 (MKSLQKG) constitute a propeptide, leader sequence. Phenylalanine 8 bears the N-methylphenylalanine mark. A helical membrane pass occupies residues 8–28 (FTLIELMIVVAIIGILAAFAI). An intrachain disulfide couples cysteine 63 to cysteine 106.

This sequence belongs to the N-Me-Phe pilin family.

It localises to the fimbrium. Its subcellular location is the membrane. Functionally, major component of the type IV fimbriae that plays an essential role in twitching motility, natural transformation, and protease secretion. The polypeptide is Type IV major fimbrial protein FimA (fimA) (Dichelobacter nodosus (strain VCS1703A)).